We begin with the raw amino-acid sequence, 556 residues long: Arginine--tRNA ligase (556 aa).

A 'HIGH' region motif is present at residues 132-142; that stretch reads ANPTGNLHLGH.

Belongs to the class-I aminoacyl-tRNA synthetase family. Monomer.

It localises to the cytoplasm. It carries out the reaction tRNA(Arg) + L-arginine + ATP = L-arginyl-tRNA(Arg) + AMP + diphosphate. This chain is Arginine--tRNA ligase, found in Bacillus licheniformis (strain ATCC 14580 / DSM 13 / JCM 2505 / CCUG 7422 / NBRC 12200 / NCIMB 9375 / NCTC 10341 / NRRL NRS-1264 / Gibson 46).